The following is an 89-amino-acid chain: Small ribosomal subunit protein uS15 (89 aa).

This sequence belongs to the universal ribosomal protein uS15 family. As to quaternary structure, part of the 30S ribosomal subunit. Forms a bridge to the 50S subunit in the 70S ribosome, contacting the 23S rRNA.

One of the primary rRNA binding proteins, it binds directly to 16S rRNA where it helps nucleate assembly of the platform of the 30S subunit by binding and bridging several RNA helices of the 16S rRNA. Its function is as follows. Forms an intersubunit bridge (bridge B4) with the 23S rRNA of the 50S subunit in the ribosome. The polypeptide is Small ribosomal subunit protein uS15 (Rhizobium etli (strain CIAT 652)).